The following is a 244-amino-acid chain: Biosynthetic peptidoglycan transglycosylase (244 aa).

Residues 23 to 43 (LVVIGAWLAGILLFSFLPVPF) form a helical membrane-spanning segment.

This sequence belongs to the glycosyltransferase 51 family.

The protein localises to the cell inner membrane. It carries out the reaction [GlcNAc-(1-&gt;4)-Mur2Ac(oyl-L-Ala-gamma-D-Glu-L-Lys-D-Ala-D-Ala)](n)-di-trans,octa-cis-undecaprenyl diphosphate + beta-D-GlcNAc-(1-&gt;4)-Mur2Ac(oyl-L-Ala-gamma-D-Glu-L-Lys-D-Ala-D-Ala)-di-trans,octa-cis-undecaprenyl diphosphate = [GlcNAc-(1-&gt;4)-Mur2Ac(oyl-L-Ala-gamma-D-Glu-L-Lys-D-Ala-D-Ala)](n+1)-di-trans,octa-cis-undecaprenyl diphosphate + di-trans,octa-cis-undecaprenyl diphosphate + H(+). The protein operates within cell wall biogenesis; peptidoglycan biosynthesis. Functionally, peptidoglycan polymerase that catalyzes glycan chain elongation from lipid-linked precursors. The protein is Biosynthetic peptidoglycan transglycosylase of Pectobacterium carotovorum subsp. carotovorum (strain PC1).